Reading from the N-terminus, the 273-residue chain is SAGA-associated factor 29 homolog B (273 aa).

An SGF29 C-terminal domain is found at 128-273 (EAYASLKGEQ…VVALPEGHRQ (146 aa)). Histone H3K4me3 N-terminus binding regions lie at residues 171–173 (DEE) and 220–223 (GTTA). The tract at residues 245–248 (FDDD) is histone H3K4me3 binding.

It belongs to the SGF29 family. In terms of tissue distribution, expressed in roots, rosette leaves, cauline leaves, stems and flowers.

It localises to the nucleus. Functionally, chromatin reader component of the transcription regulatory histone acetylation (HAT) complex SAGA. The chain is SAGA-associated factor 29 homolog B from Arabidopsis thaliana (Mouse-ear cress).